A 392-amino-acid polypeptide reads, in one-letter code: MIILKADYKKYNVSELEKLRMDEEKFYETFDNAILLQTCNRVEIIFDADSLEEIKGIENIDLEKFDILFGDKAIEHLFRVACGLESMIVGEDQILGQLKNAYLKAKEKGRISKKLEKIILKAIHTGQRARVETKINEGGVSIGSAAVELAEKIFGLEGKNVLLIGAGEMANLVIKALKEKNIKAIIVANRTYEKAEKLAKELGGMAIKFDKLEEALRYADIVISATGAPHPILNKERLKNAGKTIIIDIANPRDTTDDIRELPDIFLFTIDDLRLVAEENLKKRKEEIPKVEMIICEELERLKEFLDKMRFETAIKELGQYIENVRKKEVEKAKKILKNKNKPVEEVLEDFSKALCKRIIYDIIKIFENVEDKEVFECLAKEFKKLGNKNKN.

Substrate is bound by residues Thr-38–Arg-41, Ser-86, Glu-91–Gln-93, and Gln-97. Cys-39 serves as the catalytic Nucleophile. Gly-165–Ala-170 contributes to the NADP(+) binding site.

This sequence belongs to the glutamyl-tRNA reductase family. As to quaternary structure, homodimer.

It carries out the reaction (S)-4-amino-5-oxopentanoate + tRNA(Glu) + NADP(+) = L-glutamyl-tRNA(Glu) + NADPH + H(+). It functions in the pathway porphyrin-containing compound metabolism; protoporphyrin-IX biosynthesis; 5-aminolevulinate from L-glutamyl-tRNA(Glu): step 1/2. Its function is as follows. Catalyzes the NADPH-dependent reduction of glutamyl-tRNA(Glu) to glutamate 1-semialdehyde (GSA). This is Glutamyl-tRNA reductase from Methanocaldococcus jannaschii (strain ATCC 43067 / DSM 2661 / JAL-1 / JCM 10045 / NBRC 100440) (Methanococcus jannaschii).